The following is a 691-amino-acid chain: Transcription termination factor Rho (691 aa).

Positions 48–303 are disordered; sequence ISDHQRGGSV…PEVDETELTE (256 aa). The span at 50 to 64 shows a compositional bias: basic and acidic residues; sequence DHQRGGSVADRDAAE. Composition is skewed to low complexity over residues 65–92 and 105–119; these read RAAQ…PAAE and DTSA…QPQA. Basic and acidic residues-rich tracts occupy residues 120–158 and 188–273; these read EARE…SERR and DADR…EGGR. In terms of domain architecture, Rho RNA-BD spans 307–390; the sequence is LQPVAGILDV…VKISSVNGQP (84 aa). ATP is bound by residues 433–438, 445–450, and arginine 476; these read GKGQRG and KAGKTM.

Belongs to the Rho family. As to quaternary structure, homohexamer. The homohexamer assembles into an open ring structure.

Functionally, facilitates transcription termination by a mechanism that involves Rho binding to the nascent RNA, activation of Rho's RNA-dependent ATPase activity, and release of the mRNA from the DNA template. The sequence is that of Transcription termination factor Rho from Micrococcus luteus (Micrococcus lysodeikticus).